A 695-amino-acid polypeptide reads, in one-letter code: MKNLTTIKQTNKNVKQERRKKYADLAIQGTNNSSIASKRSVELLYLPKLSSANNFQMDKNNKLLEYFKFFVPKKIKRSPCINRGYWLRLFAIRSRLNSIIEQTPQDKKIVVVNLGCGYDPLPFQLLDTNNIQSQQYHDRVSFIDIDYSDLLKIKIELIKTIPELSKIIGLSEDKDYVDDSNVDFLTTPKYLARPCDLNDSKMFSTLLNECQLYDPNVVKVFVAEVSLAYMKPERSDSIIEATSKMENSHFIILEQLIPKGPFEPFSKQMLAHFKRNDSPLQSVLKYNTIESQVQRFNKLGFAYVNVGDMFQLWESADEATKKELLKVEPFDELEEFHLFCHHYVLCHATNYKEFAFTQGFLFDRSISEINLTVDEDYQLLECECPINRKFGDVDVAGNDVFYMGGSNPYRVNEILQLSIHYDKIDMKNIEVSSSEVPVARMCHTFTTISRNNQLLLIGGRKAPHQGLSDNWIFDMKTREWSMIKSLSHTRFRHSACSLPDGNVLILGGVTEGPAMLLYNVTEEIFKDVTPKDEFFQNSLVSAGLEFDPVSKQGIILGGGFMDQTTVSDKAIIFKYDAENATEPITVIKKLQHPLFQRYGSQIKYITPRKLLIVGGTSPSGLFDRTNSIISLDPLSETLTSIPISRRIWEDHSLMLAGFSLVSTSMGTIHIIGGGATCYGFGSVTNVGLKLIAIAK.

S-adenosyl-L-methionine-binding positions include K38, R88, G115, 146 to 147 (DY), 196 to 197 (DL), and E224. Residue R88 is the Proton donor; for both methylation and methoxycarbonylation activities of the active site. The Proton acceptor; for methoxycarbonylation activity role is filled by Y229.

This sequence belongs to the methyltransferase superfamily. LCMT family.

Its subcellular location is the cytoplasm. The protein resides in the mitochondrion. It catalyses the reaction 7-[(3S)-3-amino-3-carboxypropyl]wyosine(37) in tRNA(Phe) + S-adenosyl-L-methionine = 7-[(3S)-(3-amino-3-methoxycarbonyl)propyl]wyosine(37) in tRNA(Phe) + S-adenosyl-L-homocysteine. The enzyme catalyses 7-[(3S)-(3-amino-3-methoxycarbonyl)propyl]wyosine(37) in tRNA(Phe) + S-adenosyl-L-methionine + CO2 = wybutosine(37) in tRNA(Phe) + S-adenosyl-L-homocysteine + 2 H(+). It participates in tRNA modification; wybutosine-tRNA(Phe) biosynthesis. Functionally, S-adenosyl-L-methionine-dependent methyltransferase that acts as a component of the wybutosine biosynthesis pathway. Wybutosine is a hyper modified guanosine with a tricyclic base found at the 3'-position adjacent to the anticodon of eukaryotic phenylalanine tRNA. Catalyzes the final 2 independent reactions, methylation of the alpha-carboxy group of wybutosine-72 to form wybutosine-58, and methoxycarbonylation of alpha-amino group of wybutosine-58 through the fixation of CO(2) to complete wybutosine. This chain is tRNA wybutosine-synthesizing protein 4 (PPM2), found in Saccharomyces cerevisiae (strain ATCC 204508 / S288c) (Baker's yeast).